The following is a 659-amino-acid chain: Exoribonuclease 2 (659 aa).

The 343-residue stretch at 189 to 531 folds into the RNB domain; sequence RENLTALHFV…NHRLIKAVLA (343 aa). The region spanning 576 to 658 is the S1 motif domain; sequence NVEFNAEVQD…ATRSIVGEIL (83 aa).

Belongs to the RNR ribonuclease family. RNase II subfamily.

The protein resides in the cytoplasm. It carries out the reaction Exonucleolytic cleavage in the 3'- to 5'-direction to yield nucleoside 5'-phosphates.. In terms of biological role, involved in mRNA degradation. Hydrolyzes single-stranded polyribonucleotides processively in the 3' to 5' direction. The chain is Exoribonuclease 2 from Haemophilus influenzae (strain 86-028NP).